The following is a 266-amino-acid chain: Protein PAE0875 (266 aa).

This sequence belongs to the CinA family.

The chain is Protein PAE0875 from Pyrobaculum aerophilum (strain ATCC 51768 / DSM 7523 / JCM 9630 / CIP 104966 / NBRC 100827 / IM2).